The following is a 210-amino-acid chain: Glutathione S-transferase P 10 (210 aa).

Positions 2 to 81 (AVPQLYYFTI…HLGRVHGLNG (80 aa)) constitute a GST N-terminal domain. Glutathione-binding positions include tyrosine 8, tryptophan 41, lysine 45, 52–53 (QL), and 65–66 (QT). A GST C-terminal domain is found at 83–200 (NEQEATFLDM…YLEKRKADKV (118 aa)).

It belongs to the GST superfamily. Pi family. As to quaternary structure, homodimer. In terms of tissue distribution, expressed in cells at the mouth and adjacent to the pharyngeal bulbs of the head and also in the tail.

It catalyses the reaction RX + glutathione = an S-substituted glutathione + a halide anion + H(+). In terms of biological role, conjugation of reduced glutathione to a wide number of exogenous and endogenous hydrophobic electrophiles. Responsible for approximately one-third of 4-hydroxy-2-nonenal conjugation. May play a role in the detoxification of reactive oxygen species produced during pathogenic bacterial infection. This chain is Glutathione S-transferase P 10, found in Caenorhabditis elegans.